The following is a 301-amino-acid chain: ATP synthase gamma chain (301 aa).

It belongs to the ATPase gamma chain family. In terms of assembly, F-type ATPases have 2 components, CF(1) - the catalytic core - and CF(0) - the membrane proton channel. CF(1) has five subunits: alpha(3), beta(3), gamma(1), delta(1), epsilon(1). CF(0) has three main subunits: a, b and c.

The protein resides in the cell inner membrane. Its function is as follows. Produces ATP from ADP in the presence of a proton gradient across the membrane. The gamma chain is believed to be important in regulating ATPase activity and the flow of protons through the CF(0) complex. The protein is ATP synthase gamma chain of Bordetella petrii (strain ATCC BAA-461 / DSM 12804 / CCUG 43448).